The sequence spans 212 residues: tRNA (guanine-N(7)-)-methyltransferase (212 aa).

Positions 44, 69, 96, and 118 each coordinate S-adenosyl-L-methionine. Asp118 is an active-site residue. Substrate is bound at residue Lys122. The interval 124-129 (RHEKRR) is interaction with RNA. Substrate is bound by residues Asp154 and 191-194 (TEYE).

This sequence belongs to the class I-like SAM-binding methyltransferase superfamily. TrmB family.

The enzyme catalyses guanosine(46) in tRNA + S-adenosyl-L-methionine = N(7)-methylguanosine(46) in tRNA + S-adenosyl-L-homocysteine. It functions in the pathway tRNA modification; N(7)-methylguanine-tRNA biosynthesis. Its function is as follows. Catalyzes the formation of N(7)-methylguanine at position 46 (m7G46) in tRNA. The sequence is that of tRNA (guanine-N(7)-)-methyltransferase from Streptococcus sanguinis (strain SK36).